The primary structure comprises 437 residues: Glutamate-1-semialdehyde 2,1-aminomutase (437 aa).

Residue Lys-273 is modified to N6-(pyridoxal phosphate)lysine.

It belongs to the class-III pyridoxal-phosphate-dependent aminotransferase family. HemL subfamily. In terms of assembly, homodimer. Requires pyridoxal 5'-phosphate as cofactor.

The protein resides in the cytoplasm. The catalysed reaction is (S)-4-amino-5-oxopentanoate = 5-aminolevulinate. Its pathway is porphyrin-containing compound metabolism; protoporphyrin-IX biosynthesis; 5-aminolevulinate from L-glutamyl-tRNA(Glu): step 2/2. The chain is Glutamate-1-semialdehyde 2,1-aminomutase from Chlamydia caviae (strain ATCC VR-813 / DSM 19441 / 03DC25 / GPIC) (Chlamydophila caviae).